The following is a 446-amino-acid chain: tRNA modification GTPase MnmE (446 aa).

Arg22, Glu80, and Arg119 together coordinate (6S)-5-formyl-5,6,7,8-tetrahydrofolate. The region spanning 215 to 370 (GFKVAIIGKP…LILALENIMN (156 aa)) is the TrmE-type G domain. Asn225 lines the K(+) pocket. Residues 225-230 (NVGKSS), 244-250 (SDIAGTT), and 269-272 (DTAG) each bind GTP. Ser229 serves as a coordination point for Mg(2+). K(+)-binding residues include Ser244, Ile246, and Thr249. Mg(2+) is bound at residue Thr250. A (6S)-5-formyl-5,6,7,8-tetrahydrofolate-binding site is contributed by Lys446.

The protein belongs to the TRAFAC class TrmE-Era-EngA-EngB-Septin-like GTPase superfamily. TrmE GTPase family. Homodimer. Heterotetramer of two MnmE and two MnmG subunits. K(+) is required as a cofactor.

The protein localises to the cytoplasm. Its function is as follows. Exhibits a very high intrinsic GTPase hydrolysis rate. Involved in the addition of a carboxymethylaminomethyl (cmnm) group at the wobble position (U34) of certain tRNAs, forming tRNA-cmnm(5)s(2)U34. The chain is tRNA modification GTPase MnmE from Sulfurimonas denitrificans (strain ATCC 33889 / DSM 1251) (Thiomicrospira denitrificans (strain ATCC 33889 / DSM 1251)).